The chain runs to 578 residues: Protein BONZAI 1 (578 aa).

Gly2 carries N-myristoyl glycine lipidation. C2 domains lie at 26–163 and 176–303; these read ALGA…TSTL and QPHH…NFSL. 4 residues coordinate Ca(2+): Asp63, Asp69, Asp122, and Asp124. In terms of domain architecture, VWFA spans 341–560; that stretch reads NFMVAIDFTA…SVVQALLAEL (220 aa).

It belongs to the copine family. Interacts (via VWA domain) with BAP1 and BAP2. Interacts with HSP70-1 and HSP70-2. It depends on Ca(2+) as a cofactor. Based on mass spectrometry analysis, the N-peptide must be modified and there might be additional modifications other than myristoylation. As to expression, expressed in roots and flowers and, at higher levels, in leaves and stems. Strongly expressed in growing tissues. Not detected in green siliques.

Its subcellular location is the cell membrane. Functionally, negative regulator of cell death and defense responses. Negative regulator of several R genes, including SNC1. May have effects in promoting growth and development. May function in membrane trafficking and in fusion of vesicles with plasma membrane at low temperature. Exhibits calcium-dependent phospholipid binding properties. The sequence is that of Protein BONZAI 1 (BON1) from Arabidopsis thaliana (Mouse-ear cress).